The chain runs to 131 residues: Fluoride-specific ion channel FluC 1 (131 aa).

The next 3 membrane-spanning stretches (helical) occupy residues Phe38 to Met58, Thr69 to Asn89, and Ile108 to Ala128. The Na(+) site is built by Gly79 and Ser82.

Belongs to the fluoride channel Fluc/FEX (TC 1.A.43) family.

The protein resides in the cell membrane. The enzyme catalyses fluoride(in) = fluoride(out). With respect to regulation, na(+) is not transported, but it plays an essential structural role and its presence is essential for fluoride channel function. In terms of biological role, fluoride-specific ion channel. Important for reducing fluoride concentration in the cell, thus reducing its toxicity. This chain is Fluoride-specific ion channel FluC 1, found in Bifidobacterium longum (strain NCC 2705).